The following is a 64-amino-acid chain: Prokaryotic ubiquitin-like protein Pup (64 aa).

Residues 1-11 are compositionally biased toward basic and acidic residues; it reads MAQEQTKRGGG. The segment at 1–37 is disordered; that stretch reads MAQEQTKRGGGGDDEDDFASSTAAGQERREKLAEDTD. Residues 21–58 are ARC ATPase binding; it reads STAAGQERREKLAEDTDDLLDEIDDVLEENAEDFVRAY. A coiled-coil region spans residues 24–52; sequence AGQERREKLAEDTDDLLDEIDDVLEENAE. Position 64 is a deamidated glutamine (Gln-64). Gln-64 participates in a covalent cross-link: Isoglutamyl lysine isopeptide (Gln-Lys) (interchain with K-? in acceptor proteins).

It belongs to the prokaryotic ubiquitin-like protein family. As to quaternary structure, strongly interacts with the proteasome-associated ATPase ARC through a hydrophobic interface; the interacting region of Pup lies in its C-terminal half. There is one Pup binding site per ARC hexamer ring. Post-translationally, is modified by deamidation of its C-terminal glutamine to glutamate by the deamidase Dop, a prerequisite to the subsequent pupylation process.

It participates in protein degradation; proteasomal Pup-dependent pathway. Functionally, protein modifier that is covalently attached to lysine residues of substrate proteins, thereby targeting them for proteasomal degradation. The tagging system is termed pupylation. The sequence is that of Prokaryotic ubiquitin-like protein Pup from Mycolicibacterium paratuberculosis (strain ATCC BAA-968 / K-10) (Mycobacterium paratuberculosis).